Consider the following 220-residue polypeptide: Probable GTP-binding protein EngB (220 aa).

The 175-residue stretch at 26-200 folds into the EngB-type G domain; it reads EGIEIAFAGR…RAKLDEWYAP (175 aa). GTP is bound by residues 34–41, 61–65, 79–82, 146–149, and 179–181; these read GRSNAGKS, GRTQL, DLPG, TKAD, and FSS. The Mg(2+) site is built by serine 41 and threonine 63.

This sequence belongs to the TRAFAC class TrmE-Era-EngA-EngB-Septin-like GTPase superfamily. EngB GTPase family. Mg(2+) serves as cofactor.

Its function is as follows. Necessary for normal cell division and for the maintenance of normal septation. In Vibrio cholerae serotype O1 (strain ATCC 39315 / El Tor Inaba N16961), this protein is Probable GTP-binding protein EngB.